A 252-amino-acid chain; its full sequence is Trans-aconitate 2-methyltransferase (252 aa).

It belongs to the methyltransferase superfamily. Tam family.

The protein localises to the cytoplasm. It catalyses the reaction trans-aconitate + S-adenosyl-L-methionine = (E)-3-(methoxycarbonyl)pent-2-enedioate + S-adenosyl-L-homocysteine. Functionally, catalyzes the S-adenosylmethionine monomethyl esterification of trans-aconitate. This Shigella flexneri protein is Trans-aconitate 2-methyltransferase.